The following is a 276-amino-acid chain: Sulfur carrier protein FdhD (276 aa).

The Cysteine persulfide intermediate role is filled by Cys118.

The protein belongs to the FdhD family.

It is found in the cytoplasm. Its function is as follows. Required for formate dehydrogenase (FDH) activity. Acts as a sulfur carrier protein that transfers sulfur from IscS to the molybdenum cofactor prior to its insertion into FDH. The chain is Sulfur carrier protein FdhD from Mycobacterium bovis (strain ATCC BAA-935 / AF2122/97).